Reading from the N-terminus, the 159-residue chain is Keratin-associated protein 9-3 (159 aa).

Tandem repeats lie at residues 8–12 (CCQPT), 13–17 (CCRTT), 32–36 (CCQPS), 37–41 (CCVSS), 46–50 (CCHPT), 51–55 (CCQNT), 56–60 (CCRTT), 61–65 (CCQPI), 70–74 (CCQPS), 75–79 (CCSTP), 80–84 (CCQPT), 85–89 (CCGSS), 129–133 (CCRPA), 134–138 (CCETT), 139–143 (CCRTT), and 153–157 (CCQPS). A 16 X 5 AA repeats of C-C-[RQVSHE]-[SPTN]-[TASPI] region spans residues 8–157 (CCQPTCCRTT…TCVYSCCQPS (150 aa)).

Belongs to the KRTAP type 9 family. In terms of assembly, interacts with hair keratins.

Its function is as follows. In the hair cortex, hair keratin intermediate filaments are embedded in an interfilamentous matrix, consisting of hair keratin-associated proteins (KRTAP), which are essential for the formation of a rigid and resistant hair shaft through their extensive disulfide bond cross-linking with abundant cysteine residues of hair keratins. The matrix proteins include the high-sulfur and high-glycine-tyrosine keratins. The chain is Keratin-associated protein 9-3 (KRTAP9-3) from Homo sapiens (Human).